A 328-amino-acid polypeptide reads, in one-letter code: m7GpppN-mRNA hydrolase NUDT17 (328 aa).

The Nudix hydrolase domain maps to 90 to 236; the sequence is GVDLGVAVIL…DGTETPGLLP (147 aa). The Nudix box signature appears at 127–148; it reads GHVELEEELLDGGLRELWEESG. Mg(2+) is bound by residues glutamate 142 and glutamate 146. Residues 299–328 form a disordered region; it reads PCKSAAYLDPGPAKEEWNMDPLPPNQGSGK.

This sequence belongs to the Nudix hydrolase family. Requires Mg(2+) as cofactor. Mn(2+) is required as a cofactor.

The enzyme catalyses a 5'-end (N(7)-methyl 5'-triphosphoguanosine)-ribonucleoside in mRNA + H2O = N(7)-methyl-GDP + a 5'-end phospho-ribonucleoside in mRNA + 2 H(+). Acts as a decapping enzyme capable of hydrolyzing monomethylated capped RNAs (in vitro). Hydrolyzes monomethylated capped RNA after alpha and beta phosphates to form N(7)-methyl-GDP. Shows low activity towards unmethylated capped RNA. In Homo sapiens (Human), this protein is m7GpppN-mRNA hydrolase NUDT17 (NUDT17).